The primary structure comprises 1012 residues: Centriole and centriolar satellite protein OFD1 (1012 aa).

Residues 70–102 (LIGASNSLVADHLQRCGYEYSLSVFFPESGLAK) enclose the LisH domain. Coiled coils occupy residues 189–557 (QRIK…ENEV) and 622–662 (DSDL…NSAK). Residues 609–665 (TNYPTAWVEGSSPDSDLEFVANTKARVKELQQEAERLEKAFRSYHRRVIKNSAKSPL) are mediates homooligomerization. The segment at 615 to 1012 (WVEGSSPDSD…FSHEELDDSW (398 aa)) is mediates the interaction with SDCCAG8. Phosphoserine occurs at positions 663, 669, 686, and 720. Residues 719 to 744 (GSAASRLRGGTSSRRLSSTPLPKAKR) are disordered. Positions 720 to 737 (SAASRLRGGTSSRRLSST) are enriched in low complexity. At Ser-735 the chain carries Phosphoserine; by PKA. Residues Ser-745, Ser-774, Ser-789, and Ser-811 each carry the phosphoserine modification. The tract at residues 757 to 794 (RSHIASPSPCPDRMPLPSPTESRHSLSIPPVSSPPEQK) is disordered. Over residues 764–774 (SPCPDRMPLPS) the composition is skewed to pro residues. Disordered stretches follow at residues 824 to 904 (FESS…LQEV) and 963 to 1012 (KIIQ…DDSW). Residues 867-956 (SVDQKQIEEQ…IKDKSAHSEN (90 aa)) are a coiled coil. Composition is skewed to basic and acidic residues over residues 871-904 (KQIE…LQEV) and 973-982 (SADKSSKKMV).

This sequence belongs to the OFD1 family. Homooligomer. Interacts with LCA5. Interacts with RUVBL1; the interaction is direct and may mediate interaction with the NuA4 histone acetyltransferase complex. Interacts with SDCCAG8; the interaction is direct. Interacts with MAP1LC3B. Interacts with C2CD3; OFD1 may act as a negative regulator of C2CD3. Forms a complex with KIAA0753/OFIP and CEP20/FOR20; the interaction with CEP20 is detected only in the presence of KIAA0753. Interacts with PCM1; this interaction may be mediated by KIAA0753/OFIP. Interacts with TBC1D31; regulates OFD1 activity in cilium assembly. Phosphorylated. Phosphorylation at Ser-735, by the cAMP-dependent protein kinase PKA, triggers ubiquitination and proteasomal degradation of OFD1. Also increases its interaction with TBC1D31 and regulates its function in ciliogenesis. In terms of processing, ubiquitinated by PJA2, upon phosphorylation at Ser-735 by PKA, leads to the proteasomal degradation of OFD1. As to expression, widely expressed. Expressed in 9 and 14 weeks old embryos in metanephric mesenchyme, oral mucosa, lung, heart, nasal and cranial cartilage, and brain. Expressed in metanephros, brain, tongue, and limb.

It localises to the cytoplasm. The protein resides in the cytoskeleton. Its subcellular location is the microtubule organizing center. It is found in the centrosome. The protein localises to the centriole. It localises to the cilium basal body. The protein resides in the nucleus. Its subcellular location is the centriolar satellite. Its function is as follows. Component of the centrioles controlling mother and daughter centrioles length. Recruits to the centriole IFT88 and centriole distal appendage-specific proteins including CEP164. Involved in the biogenesis of the cilium, a centriole-associated function. The cilium is a cell surface projection found in many vertebrate cells required to transduce signals important for development and tissue homeostasis. Plays an important role in development by regulating Wnt signaling and the specification of the left-right axis. Only OFD1 localized at the centriolar satellites is removed by autophagy, which is an important step in the ciliogenesis regulation. The polypeptide is Centriole and centriolar satellite protein OFD1 (OFD1) (Homo sapiens (Human)).